A 320-amino-acid polypeptide reads, in one-letter code: uncharacterized protein (320 aa).

Belongs to the anthranilate phosphoribosyltransferase family.

This is an uncharacterized protein from Escherichia coli (strain K12).